The following is a 600-amino-acid chain: Kynurenine 3-monooxygenase (600 aa).

Residues 217 to 242 are disordered; sequence GDSCADEPSGCGGRKQATTKSQGSEY.

It belongs to the aromatic-ring hydroxylase family. KMO subfamily. FAD is required as a cofactor.

Its subcellular location is the mitochondrion outer membrane. It carries out the reaction L-kynurenine + NADPH + O2 + H(+) = 3-hydroxy-L-kynurenine + NADP(+) + H2O. The protein operates within cofactor biosynthesis; NAD(+) biosynthesis; quinolinate from L-kynurenine: step 1/3. Its function is as follows. Catalyzes the hydroxylation of L-kynurenine (L-Kyn) to form 3-hydroxy-L-kynurenine (L-3OHKyn). Required for synthesis of quinolinic acid. This chain is Kynurenine 3-monooxygenase, found in Mycosarcoma maydis (Corn smut fungus).